A 227-amino-acid polypeptide reads, in one-letter code: Cytochrome c oxidase subunit 2 (227 aa).

At 1–14 the chain is on the mitochondrial intermembrane side; it reads MAHPVQLGFQDAAS. Residues 15-45 traverse the membrane as a helical segment; that stretch reads PIMEELLYFHDHTLMIMFLISSLVLYIISLM. At 46–59 the chain is on the mitochondrial matrix side; it reads LTTKLTHTSTMDAQ. A helical transmembrane segment spans residues 60–87; it reads EVETVWTILPAAILILIALPSLRILYMM. The Mitochondrial intermembrane segment spans residues 88–227; sequence DEITSPSLTL…HFEEWLLFTL (140 aa). Cu cation-binding residues include His-161, Cys-196, Glu-198, Cys-200, His-204, and Met-207. Glu-198 is a Mg(2+) binding site.

The protein belongs to the cytochrome c oxidase subunit 2 family. In terms of assembly, component of the cytochrome c oxidase (complex IV, CIV), a multisubunit enzyme composed of 14 subunits. The complex is composed of a catalytic core of 3 subunits MT-CO1, MT-CO2 and MT-CO3, encoded in the mitochondrial DNA, and 11 supernumerary subunits COX4I, COX5A, COX5B, COX6A, COX6B, COX6C, COX7A, COX7B, COX7C, COX8 and NDUFA4, which are encoded in the nuclear genome. The complex exists as a monomer or a dimer and forms supercomplexes (SCs) in the inner mitochondrial membrane with NADH-ubiquinone oxidoreductase (complex I, CI) and ubiquinol-cytochrome c oxidoreductase (cytochrome b-c1 complex, complex III, CIII), resulting in different assemblies (supercomplex SCI(1)III(2)IV(1) and megacomplex MCI(2)III(2)IV(2)). Found in a complex with TMEM177, COA6, COX18, COX20, SCO1 and SCO2. Interacts with TMEM177 in a COX20-dependent manner. Interacts with COX20. Interacts with COX16. The cofactor is Cu cation.

The protein resides in the mitochondrion inner membrane. It catalyses the reaction 4 Fe(II)-[cytochrome c] + O2 + 8 H(+)(in) = 4 Fe(III)-[cytochrome c] + 2 H2O + 4 H(+)(out). Its function is as follows. Component of the cytochrome c oxidase, the last enzyme in the mitochondrial electron transport chain which drives oxidative phosphorylation. The respiratory chain contains 3 multisubunit complexes succinate dehydrogenase (complex II, CII), ubiquinol-cytochrome c oxidoreductase (cytochrome b-c1 complex, complex III, CIII) and cytochrome c oxidase (complex IV, CIV), that cooperate to transfer electrons derived from NADH and succinate to molecular oxygen, creating an electrochemical gradient over the inner membrane that drives transmembrane transport and the ATP synthase. Cytochrome c oxidase is the component of the respiratory chain that catalyzes the reduction of oxygen to water. Electrons originating from reduced cytochrome c in the intermembrane space (IMS) are transferred via the dinuclear copper A center (CU(A)) of subunit 2 and heme A of subunit 1 to the active site in subunit 1, a binuclear center (BNC) formed by heme A3 and copper B (CU(B)). The BNC reduces molecular oxygen to 2 water molecules using 4 electrons from cytochrome c in the IMS and 4 protons from the mitochondrial matrix. The chain is Cytochrome c oxidase subunit 2 (MT-CO2) from Varecia variegata (Black-and-white ruffed lemur).